A 269-amino-acid chain; its full sequence is Tryptophan synthase alpha chain (269 aa).

Active-site proton acceptor residues include E49 and D60.

Belongs to the TrpA family. As to quaternary structure, tetramer of two alpha and two beta chains.

The catalysed reaction is (1S,2R)-1-C-(indol-3-yl)glycerol 3-phosphate + L-serine = D-glyceraldehyde 3-phosphate + L-tryptophan + H2O. It functions in the pathway amino-acid biosynthesis; L-tryptophan biosynthesis; L-tryptophan from chorismate: step 5/5. The alpha subunit is responsible for the aldol cleavage of indoleglycerol phosphate to indole and glyceraldehyde 3-phosphate. This Salmonella arizonae (strain ATCC BAA-731 / CDC346-86 / RSK2980) protein is Tryptophan synthase alpha chain.